A 210-amino-acid chain; its full sequence is Large ribosomal subunit protein uL3 (210 aa).

The interval Gly-131–Arg-154 is disordered.

Belongs to the universal ribosomal protein uL3 family. As to quaternary structure, part of the 50S ribosomal subunit. Forms a cluster with proteins L14 and L19.

Functionally, one of the primary rRNA binding proteins, it binds directly near the 3'-end of the 23S rRNA, where it nucleates assembly of the 50S subunit. The sequence is that of Large ribosomal subunit protein uL3 from Thermoanaerobacter pseudethanolicus (strain ATCC 33223 / 39E) (Clostridium thermohydrosulfuricum).